A 148-amino-acid polypeptide reads, in one-letter code: Large ribosomal subunit protein bL9 (148 aa).

The protein belongs to the bacterial ribosomal protein bL9 family.

In terms of biological role, binds to the 23S rRNA. The protein is Large ribosomal subunit protein bL9 of Listeria monocytogenes serotype 4a (strain HCC23).